The sequence spans 20 residues: Pregnancy-associated glycoprotein 67A (20 aa).

2 N-linked (GlcNAc...) asparagine glycosylation sites follow: N4 and N20.

The protein belongs to the peptidase A1 family. As to expression, chorionic epithelium (trophectoderm) and placental cotyledons.

Its subcellular location is the secreted. It localises to the extracellular space. The sequence is that of Pregnancy-associated glycoprotein 67A from Bison bonasus (European bison).